Reading from the N-terminus, the 144-residue chain is Transcription antitermination protein NusB (144 aa).

The protein belongs to the NusB family.

In terms of biological role, involved in transcription antitermination. Required for transcription of ribosomal RNA (rRNA) genes. Binds specifically to the boxA antiterminator sequence of the ribosomal RNA (rrn) operons. This Blochmanniella pennsylvanica (strain BPEN) protein is Transcription antitermination protein NusB.